The following is a 737-amino-acid chain: O-GlcNAcase BT_4395 (737 aa).

An N-terminal signal peptide occupies residues 1 to 21; that stretch reads MKNNKIYLLGACLLCAVTTFA. The segment at 148–433 is catalytic domain; that stretch reads VRYRGVVEGF…WKDAIRTILP (286 aa). The 268-residue stretch at 149-416 folds into the GH84 domain; it reads RYRGVVEGFY…SVASYAWNPA (268 aa). 3 residues coordinate a protein: glycine 156, lysine 187, and aspartate 263. The active-site Proton donor is aspartate 264. Residues tyrosine 303, 358-360, aspartate 365, and asparagine 393 contribute to the a protein site; that span reads WWN.

The protein belongs to the glycosyl hydrolase 84 family. Homodimer.

The catalysed reaction is 3-O-(N-acetyl-beta-D-glucosaminyl)-L-seryl-[protein] + H2O = N-acetyl-D-glucosamine + L-seryl-[protein]. It catalyses the reaction 3-O-(N-acetyl-beta-D-glucosaminyl)-L-threonyl-[protein] + H2O = L-threonyl-[protein] + N-acetyl-D-glucosamine. Inhibited by 1,2-dideoxy-2'-methyl-alpha-D-glucopyranoso-[2,1-d]-delta 2'-thiazoline (NAG-thiazoline) and O-(2-acetamido-2-deoxy-D-glucopyranosylidene)amino-N-phenyl-carbamate (PUGNAc). Not inhibited by Streptozotocin. Its function is as follows. Can hydrolyze the glycosidic link of O-GlcNAcylated proteins. Can use p-nitrophenyl-beta-GlcNAc and 4-methylumbelliferone-GlcNAc as substrates (in vitro). This is O-GlcNAcase BT_4395 from Bacteroides thetaiotaomicron (strain ATCC 29148 / DSM 2079 / JCM 5827 / CCUG 10774 / NCTC 10582 / VPI-5482 / E50).